Reading from the N-terminus, the 443-residue chain is D(2) dopamine receptor (443 aa).

At 1-37 (MDPLNLSWYDDDLERQNWSRPFNGSDGKADRPHYNYY) the chain is on the extracellular side. N-linked (GlcNAc...) asparagine glycans are attached at residues Asn5, Asn17, and Asn23. Residues 38 to 60 (ATLLTLLIAVIVFGNVLVCMAVS) traverse the membrane as a helical segment. The Cytoplasmic portion of the chain corresponds to 61-70 (REKALQTTTN). A helical membrane pass occupies residues 71–93 (YLIVSLAVADLLVATLVMPWVVY). The Extracellular segment spans residues 94 to 108 (LEVVGEWKFSKIHCD). Cys107 and Cys182 are joined by a disulfide. A helical membrane pass occupies residues 109-130 (IFVTLDVMMCTASILNLCAISI). Residues 131 to 151 (DRYTAVAMPMLYNTRYSSKRR) are Cytoplasmic-facing. The chain crosses the membrane as a helical span at residues 152–172 (VTVMIAIVWVLSFTISCPLLF). At 173 to 188 (GLNNADQNECIIANPA) the chain is on the extracellular side. A helical membrane pass occupies residues 189 to 213 (FVVYSSIVSFYVPFIVTLLVYIKIY). An interaction with PPP1R9B region spans residues 211–373 (KIYIVLRRRR…SQQKEKKATQ (163 aa)). Residues 214 to 373 (IVLRRRRKRV…SQQKEKKATQ (160 aa)) are Cytoplasmic-facing. The segment at 281-332 (MEMLSSTSPPERTRYSPIPPSHHQLTLPDPSHHGLHSTPDSPAKPEKNGHAK) is disordered. Residues 374 to 395 (MLAIVLGVFIICWLPFFITHIL) form a helical membrane-spanning segment. Over 396–409 (NIHCDCNIPPVLYS) the chain is Extracellular. A disulfide bridge links Cys399 with Cys401. A helical transmembrane segment spans residues 410-431 (AFTWLGYVNSAVNPIIYTTFNI). Residues 432 to 443 (EFRKAFLKILHC) are Cytoplasmic-facing. A lipid anchor (S-palmitoyl cysteine) is attached at Cys443.

The protein belongs to the G-protein coupled receptor 1 family. Forms homo- and heterooligomers with DRD4. The interaction with DRD4 may modulate agonist-induced downstream signaling. Interacts with CADPS and CADPS2. Interacts with GPRASP1, PPP1R9B and CLIC6. Interacts with ARRB2. Interacts with HTR2A. Interacts with DRD1. Interacts with KCNA2. Post-translationally, palmitoylated. Palmitoylation which is required for proper localization to the plasma membrane and stability of the receptor could be carried on by ZDHHC4, ZDHHC3 and ZDHHC8.

It is found in the cell membrane. Its subcellular location is the golgi apparatus membrane. Its function is as follows. Dopamine receptor whose activity is mediated by G proteins which inhibit adenylyl cyclase. Positively regulates postnatal regression of retinal hyaloid vessels via suppression of VEGFR2/KDR activity, downstream of OPN5. The chain is D(2) dopamine receptor (DRD2) from Chlorocebus aethiops (Green monkey).